A 480-amino-acid chain; its full sequence is tRNA-2-methylthio-N(6)-dimethylallyladenosine synthase (480 aa).

The MTTase N-terminal domain maps to arginine 32–alanine 149. [4Fe-4S] cluster is bound by residues cysteine 41, cysteine 78, cysteine 112, cysteine 186, cysteine 190, and cysteine 193. A Radical SAM core domain is found at arginine 172–alanine 405. Residues glutamine 408–aspartate 471 enclose the TRAM domain.

This sequence belongs to the methylthiotransferase family. MiaB subfamily. Monomer. Requires [4Fe-4S] cluster as cofactor.

It is found in the cytoplasm. The enzyme catalyses N(6)-dimethylallyladenosine(37) in tRNA + (sulfur carrier)-SH + AH2 + 2 S-adenosyl-L-methionine = 2-methylsulfanyl-N(6)-dimethylallyladenosine(37) in tRNA + (sulfur carrier)-H + 5'-deoxyadenosine + L-methionine + A + S-adenosyl-L-homocysteine + 2 H(+). Functionally, catalyzes the methylthiolation of N6-(dimethylallyl)adenosine (i(6)A), leading to the formation of 2-methylthio-N6-(dimethylallyl)adenosine (ms(2)i(6)A) at position 37 in tRNAs that read codons beginning with uridine. The chain is tRNA-2-methylthio-N(6)-dimethylallyladenosine synthase from Bordetella petrii (strain ATCC BAA-461 / DSM 12804 / CCUG 43448).